A 186-amino-acid chain; its full sequence is ATP synthase subunit delta, cyanelle (186 aa).

This sequence belongs to the ATPase delta chain family. F-type ATPases have 2 components, F(1) - the catalytic core - and F(0) - the membrane proton channel. F(1) has five subunits: alpha(3), beta(3), gamma(1), delta(1), epsilon(1). CF(0) has four main subunits: a(1), b(1), b'(1) and c(10-14). The alpha and beta chains form an alternating ring which encloses part of the gamma chain. F(1) is attached to F(0) by a central stalk formed by the gamma and epsilon chains, while a peripheral stalk is formed by the delta, b and b' chains.

It is found in the plastid. The protein resides in the cyanelle thylakoid membrane. In terms of biological role, f(1)F(0) ATP synthase produces ATP from ADP in the presence of a proton or sodium gradient. F-type ATPases consist of two structural domains, F(1) containing the extramembraneous catalytic core and F(0) containing the membrane proton channel, linked together by a central stalk and a peripheral stalk. During catalysis, ATP synthesis in the catalytic domain of F(1) is coupled via a rotary mechanism of the central stalk subunits to proton translocation. Functionally, this protein is part of the stalk that links CF(0) to CF(1). It either transmits conformational changes from CF(0) to CF(1) or is implicated in proton conduction. In Cyanophora paradoxa, this protein is ATP synthase subunit delta, cyanelle.